A 71-amino-acid chain; its full sequence is Pro-glucagon (71 aa).

It belongs to the glucagon family.

It is found in the secreted. In terms of biological role, plays a key role in glucose metabolism and homeostasis. Regulates blood glucose by increasing gluconeogenesis and decreasing glycolysis. This chain is Pro-glucagon (gcg), found in Ictalurus punctatus (Channel catfish).